The following is a 418-amino-acid chain: UDP-N-acetylglucosamine 1-carboxyvinyltransferase 2 (418 aa).

K22–N23 lines the phosphoenolpyruvate pocket. R92 contributes to the UDP-N-acetyl-alpha-D-glucosamine binding site. The active-site Proton donor is the C116. At C116 the chain carries 2-(S-cysteinyl)pyruvic acid O-phosphothioketal. 2 residues coordinate UDP-N-acetyl-alpha-D-glucosamine: D305 and I327.

Belongs to the EPSP synthase family. MurA subfamily.

Its subcellular location is the cytoplasm. It catalyses the reaction phosphoenolpyruvate + UDP-N-acetyl-alpha-D-glucosamine = UDP-N-acetyl-3-O-(1-carboxyvinyl)-alpha-D-glucosamine + phosphate. It functions in the pathway cell wall biogenesis; peptidoglycan biosynthesis. Functionally, cell wall formation. Adds enolpyruvyl to UDP-N-acetylglucosamine. This Mesorhizobium japonicum (strain LMG 29417 / CECT 9101 / MAFF 303099) (Mesorhizobium loti (strain MAFF 303099)) protein is UDP-N-acetylglucosamine 1-carboxyvinyltransferase 2.